Consider the following 184-residue polypeptide: Ribosome-recycling factor (184 aa).

Over residues 133–162 (RDGMDNLKQDENKKEISEDERKRHETEVQK) the composition is skewed to basic and acidic residues. Positions 133–163 (RDGMDNLKQDENKKEISEDERKRHETEVQKL) are disordered.

Belongs to the RRF family.

It is found in the cytoplasm. In terms of biological role, responsible for the release of ribosomes from messenger RNA at the termination of protein biosynthesis. May increase the efficiency of translation by recycling ribosomes from one round of translation to another. The protein is Ribosome-recycling factor of Sphingopyxis alaskensis (strain DSM 13593 / LMG 18877 / RB2256) (Sphingomonas alaskensis).